Reading from the N-terminus, the 256-residue chain is tRNA pseudouridine synthase A (256 aa).

Catalysis depends on aspartate 43, which acts as the Nucleophile. Tyrosine 94 contributes to the substrate binding site.

Belongs to the tRNA pseudouridine synthase TruA family.

The enzyme catalyses uridine(38/39/40) in tRNA = pseudouridine(38/39/40) in tRNA. In terms of biological role, formation of pseudouridine at positions 38, 39 and 40 in the anticodon stem and loop of transfer RNAs. The polypeptide is tRNA pseudouridine synthase A (Pyrobaculum aerophilum (strain ATCC 51768 / DSM 7523 / JCM 9630 / CIP 104966 / NBRC 100827 / IM2)).